The primary structure comprises 148 residues: Large ribosomal subunit protein uL15 (148 aa).

The segment covering 1-30 (MPSKLRKTRKLRGHVSHGHGRIGKHRKHPG) has biased composition (basic residues). The tract at residues 1–38 (MPSKLRKTRKLRGHVSHGHGRIGKHRKHPGGRGNAGGM) is disordered.

The protein belongs to the universal ribosomal protein uL15 family. As to quaternary structure, component of the large ribosomal subunit.

The protein localises to the cytoplasm. Functionally, component of the large ribosomal subunit. The ribosome is a large ribonucleoprotein complex responsible for the synthesis of proteins in the cell. This Xenopus laevis (African clawed frog) protein is Large ribosomal subunit protein uL15 (rpl27a).